Reading from the N-terminus, the 315-residue chain is Porphobilinogen deaminase (315 aa).

Cys-245 carries the post-translational modification S-(dipyrrolylmethanemethyl)cysteine.

It belongs to the HMBS family. As to quaternary structure, monomer. Dipyrromethane is required as a cofactor.

It catalyses the reaction 4 porphobilinogen + H2O = hydroxymethylbilane + 4 NH4(+). It participates in porphyrin-containing compound metabolism; protoporphyrin-IX biosynthesis; coproporphyrinogen-III from 5-aminolevulinate: step 2/4. It functions in the pathway porphyrin-containing compound metabolism; chlorophyll biosynthesis. Functionally, tetrapolymerization of the monopyrrole PBG into the hydroxymethylbilane pre-uroporphyrinogen in several discrete steps. The protein is Porphobilinogen deaminase of Prochlorococcus marinus (strain NATL2A).